Here is a 234-residue protein sequence, read N- to C-terminus: Large ribosomal subunit protein bL25 (234 aa).

The tract at residues 1–24 is disordered; that stretch reads MATVMELKATARPKSGKGAARAER.

It belongs to the bacterial ribosomal protein bL25 family. CTC subfamily. In terms of assembly, part of the 50S ribosomal subunit; part of the 5S rRNA/L5/L18/L25 subcomplex. Contacts the 5S rRNA. Binds to the 5S rRNA independently of L5 and L18.

Functionally, this is one of the proteins that binds to the 5S RNA in the ribosome where it forms part of the central protuberance. This chain is Large ribosomal subunit protein bL25, found in Rhodopseudomonas palustris (strain BisB5).